A 173-amino-acid chain; its full sequence is Putative metal-dependent hydrolase BC_2708 (173 aa).

Residues H65, H156, and H160 each contribute to the Zn(2+) site.

The protein belongs to the metal hydrolase YfiT family. In terms of assembly, homodimer. Requires Zn(2+) as cofactor.

It localises to the cytoplasm. Its function is as follows. Possible metal-dependent hydrolase. The protein is Putative metal-dependent hydrolase BC_2708 of Bacillus cereus (strain ATCC 14579 / DSM 31 / CCUG 7414 / JCM 2152 / NBRC 15305 / NCIMB 9373 / NCTC 2599 / NRRL B-3711).